Reading from the N-terminus, the 370-residue chain is MTVRNLFLLPGDGIGPEAMAEVRKIIAYMNAERDAGFVTDEGLVGGSAYDAHGAAISEGDMAKALAADAVLFGAVGGPKWDAVPYEVRPEAGLLRLRKDLELFANLRPAICYPALANASSLKPELVEGLDILIVRELTGGVYFGEPKEIVDLGNGQKRGIDTQVYDTYEIERIAGVAFELARTRNNRVCSMEKRNVMKSGVLWNQVVTETHKAKYSDVQLEHMLADAGGMQLVRQPKQFDVIVTDNLFGDMLSDVAAMLTGSLGMLPSASLGAPDAKTGKRKALYEPVHGSAPDIAGTGVANPIAMIASFAMCLRYSFNLVKEADDLEKAIANVLDQGIRTGDIMAEGCRKVGTAEMGDAILAEFKSLSA.

77-90 contributes to the NAD(+) binding site; it reads GPKWDAVPYEVRPE. 4 residues coordinate substrate: Arg-97, Arg-107, Arg-135, and Asp-226. Mg(2+) is bound by residues Asp-226, Asp-250, and Asp-254. Residue 290 to 302 coordinates NAD(+); that stretch reads GSAPDIAGTGVAN.

This sequence belongs to the isocitrate and isopropylmalate dehydrogenases family. LeuB type 1 subfamily. Homodimer. Mg(2+) serves as cofactor. Mn(2+) is required as a cofactor.

It is found in the cytoplasm. The enzyme catalyses (2R,3S)-3-isopropylmalate + NAD(+) = 4-methyl-2-oxopentanoate + CO2 + NADH. It participates in amino-acid biosynthesis; L-leucine biosynthesis; L-leucine from 3-methyl-2-oxobutanoate: step 3/4. Functionally, catalyzes the oxidation of 3-carboxy-2-hydroxy-4-methylpentanoate (3-isopropylmalate) to 3-carboxy-4-methyl-2-oxopentanoate. The product decarboxylates to 4-methyl-2 oxopentanoate. The polypeptide is 3-isopropylmalate dehydrogenase (Rhizobium meliloti (strain 1021) (Ensifer meliloti)).